A 428-amino-acid polypeptide reads, in one-letter code: Chaperone SurA (428 aa).

The first 19 residues, 1 to 19 (MNIWKTLLLGMLVTGSAVS), serve as a signal peptide directing secretion. PpiC domains follow at residues 170-268 (SVEY…KIED) and 277-377 (VTEV…EVLD).

It localises to the periplasm. The catalysed reaction is [protein]-peptidylproline (omega=180) = [protein]-peptidylproline (omega=0). Its function is as follows. Chaperone involved in the correct folding and assembly of outer membrane proteins. Recognizes specific patterns of aromatic residues and the orientation of their side chains, which are found more frequently in integral outer membrane proteins. May act in both early periplasmic and late outer membrane-associated steps of protein maturation. The protein is Chaperone SurA of Vibrio vulnificus (strain CMCP6).